Reading from the N-terminus, the 121-residue chain is Small ribosomal subunit protein bS6 (121 aa).

The protein belongs to the bacterial ribosomal protein bS6 family.

Its function is as follows. Binds together with bS18 to 16S ribosomal RNA. The protein is Small ribosomal subunit protein bS6 of Rickettsia conorii (strain ATCC VR-613 / Malish 7).